The chain runs to 582 residues: Protein alan shepard (582 aa).

Over residues 1-12 (MHPRYSPAPPPQ) the composition is skewed to pro residues. The disordered stretch occupies residues 1–73 (MHPRYSPAPP…AAPPTSRSAF (73 aa)). Residue Y5 is modified to Phosphotyrosine. Residues 13–24 (QQQQMGGPLHQQ) are compositionally biased toward low complexity. Gly residues predominate over residues 25–36 (QGGGGGGGGGIR). Over residues 39–57 (SNAQQLPPQIPRSQNYSNG) the composition is skewed to polar residues. A compositionally biased stretch (low complexity) spans 58-72 (SSSSAAAAPPTSRSA). A phosphotyrosine mark is found at Y125 and Y142. The interval 164–225 (PATTTYGQRV…TVQNQNQQGG (62 aa)) is disordered. Over residues 178-225 (SPSNTNSSSSSNTGSQSGTLSTSLSNTTNTNTNMGPNGTVQNQNQQGG) the composition is skewed to low complexity. 2 consecutive RRM domains span residues 231–304 (TNLY…MAKQ) and 310–389 (TNLY…FADG). The segment at 555-582 (PMTDSEQASTAASPDEAYTQYPHQAAPK) is disordered.

Has a role in the perception of gravity. This Drosophila yakuba (Fruit fly) protein is Protein alan shepard.